The sequence spans 485 residues: Adenosylhomocysteinase (485 aa).

Substrate-binding residues include Thr-60, Asp-146, and Glu-208. Residue 209–211 (TTT) participates in NAD(+) binding. Positions 238 and 242 each coordinate substrate. NAD(+) is bound by residues Asn-243, 272-277 (GYGDVG), Glu-295, Asn-330, 351-353 (IGH), and Asn-399.

The protein belongs to the adenosylhomocysteinase family. It depends on NAD(+) as a cofactor.

Its subcellular location is the cytoplasm. The enzyme catalyses S-adenosyl-L-homocysteine + H2O = L-homocysteine + adenosine. The protein operates within amino-acid biosynthesis; L-homocysteine biosynthesis; L-homocysteine from S-adenosyl-L-homocysteine: step 1/1. Its function is as follows. May play a key role in the regulation of the intracellular concentration of adenosylhomocysteine. This Streptomyces coelicolor (strain ATCC BAA-471 / A3(2) / M145) protein is Adenosylhomocysteinase.